A 411-amino-acid chain; its full sequence is Diaminobutyrate--2-oxoglutarate transaminase (411 aa).

Lys262 is subject to N6-(pyridoxal phosphate)lysine.

This sequence belongs to the class-III pyridoxal-phosphate-dependent aminotransferase family. It depends on pyridoxal 5'-phosphate as a cofactor.

The catalysed reaction is L-2,4-diaminobutanoate + 2-oxoglutarate = L-aspartate 4-semialdehyde + L-glutamate. It functions in the pathway amine and polyamine biosynthesis; ectoine biosynthesis; L-ectoine from L-aspartate 4-semialdehyde: step 1/3. Its function is as follows. Catalyzes reversively the conversion of L-aspartate beta-semialdehyde (ASA) to L-2,4-diaminobutyrate (DABA) by transamination with L-glutamate. In Vibrio cholerae serotype O1 (strain ATCC 39315 / El Tor Inaba N16961), this protein is Diaminobutyrate--2-oxoglutarate transaminase (ectB).